The sequence spans 51 residues: MARNKPLGKKLRLAAALNSNRNPPLWVIAKTKRRVTRSPARRHWRRQKLKA.

A disordered region spans residues 32-51 (KRRVTRSPARRHWRRQKLKA).

It belongs to the eukaryotic ribosomal protein eL39 family.

This Pyrobaculum calidifontis (strain DSM 21063 / JCM 11548 / VA1) protein is Large ribosomal subunit protein eL39.